The following is a 146-amino-acid chain: D-aminoacyl-tRNA deacylase (146 aa).

Positions 137–138 (GP) match the Gly-cisPro motif, important for rejection of L-amino acids motif.

Belongs to the DTD family. In terms of assembly, homodimer.

It localises to the cytoplasm. It catalyses the reaction glycyl-tRNA(Ala) + H2O = tRNA(Ala) + glycine + H(+). It carries out the reaction a D-aminoacyl-tRNA + H2O = a tRNA + a D-alpha-amino acid + H(+). In terms of biological role, an aminoacyl-tRNA editing enzyme that deacylates mischarged D-aminoacyl-tRNAs. Also deacylates mischarged glycyl-tRNA(Ala), protecting cells against glycine mischarging by AlaRS. Acts via tRNA-based rather than protein-based catalysis; rejects L-amino acids rather than detecting D-amino acids in the active site. By recycling D-aminoacyl-tRNA to D-amino acids and free tRNA molecules, this enzyme counteracts the toxicity associated with the formation of D-aminoacyl-tRNA entities in vivo and helps enforce protein L-homochirality. In Bacillus thuringiensis subsp. konkukian (strain 97-27), this protein is D-aminoacyl-tRNA deacylase.